Consider the following 601-residue polypeptide: Elongation factor 4 (601 aa).

The tr-type G domain occupies 5–187; sequence SNIRNFSIIA…AIVERLPAPE (183 aa). GTP contacts are provided by residues 17–22 and 134–137; these read DHGKST and NKID.

Belongs to the TRAFAC class translation factor GTPase superfamily. Classic translation factor GTPase family. LepA subfamily.

It is found in the cell inner membrane. It carries out the reaction GTP + H2O = GDP + phosphate + H(+). Required for accurate and efficient protein synthesis under certain stress conditions. May act as a fidelity factor of the translation reaction, by catalyzing a one-codon backward translocation of tRNAs on improperly translocated ribosomes. Back-translocation proceeds from a post-translocation (POST) complex to a pre-translocation (PRE) complex, thus giving elongation factor G a second chance to translocate the tRNAs correctly. Binds to ribosomes in a GTP-dependent manner. The polypeptide is Elongation factor 4 (Oleidesulfovibrio alaskensis (strain ATCC BAA-1058 / DSM 17464 / G20) (Desulfovibrio alaskensis)).